A 347-amino-acid polypeptide reads, in one-letter code: UDP-3-O-acylglucosamine N-acyltransferase (347 aa).

The active-site Proton acceptor is His-248.

The protein belongs to the transferase hexapeptide repeat family. LpxD subfamily. As to quaternary structure, homotrimer.

It carries out the reaction a UDP-3-O-[(3R)-3-hydroxyacyl]-alpha-D-glucosamine + a (3R)-hydroxyacyl-[ACP] = a UDP-2-N,3-O-bis[(3R)-3-hydroxyacyl]-alpha-D-glucosamine + holo-[ACP] + H(+). Its pathway is bacterial outer membrane biogenesis; LPS lipid A biosynthesis. Functionally, catalyzes the N-acylation of UDP-3-O-acylglucosamine using 3-hydroxyacyl-ACP as the acyl donor. Is involved in the biosynthesis of lipid A, a phosphorylated glycolipid that anchors the lipopolysaccharide to the outer membrane of the cell. In Parasynechococcus marenigrum (strain WH8102), this protein is UDP-3-O-acylglucosamine N-acyltransferase.